Here is a 247-residue protein sequence, read N- to C-terminus: Triosephosphate isomerase (247 aa).

A substrate-binding site is contributed by 9-11; it reads NWK. Residue His94 is the Electrophile of the active site. Glu166 serves as the catalytic Proton acceptor. Substrate is bound by residues Gly172, Ser211, and 232–233; that span reads GG.

The protein belongs to the triosephosphate isomerase family. In terms of assembly, homodimer.

It is found in the cytoplasm. The catalysed reaction is D-glyceraldehyde 3-phosphate = dihydroxyacetone phosphate. It participates in carbohydrate biosynthesis; gluconeogenesis. Its pathway is carbohydrate degradation; glycolysis; D-glyceraldehyde 3-phosphate from glycerone phosphate: step 1/1. In terms of biological role, involved in the gluconeogenesis. Catalyzes stereospecifically the conversion of dihydroxyacetone phosphate (DHAP) to D-glyceraldehyde-3-phosphate (G3P). The polypeptide is Triosephosphate isomerase (Cupriavidus taiwanensis (strain DSM 17343 / BCRC 17206 / CCUG 44338 / CIP 107171 / LMG 19424 / R1) (Ralstonia taiwanensis (strain LMG 19424))).